The chain runs to 224 residues: uncharacterized protein (224 aa).

Residues 2-221 (IEAKNVWKIY…KLRDGEIVEI (220 aa)) form the ABC transporter domain. 38-45 (GPSGCGKS) contacts ATP.

It belongs to the ABC transporter superfamily.

This is an uncharacterized protein from Methanocaldococcus jannaschii (strain ATCC 43067 / DSM 2661 / JAL-1 / JCM 10045 / NBRC 100440) (Methanococcus jannaschii).